A 104-amino-acid polypeptide reads, in one-letter code: Large ribosomal subunit protein eL30 (104 aa).

It belongs to the eukaryotic ribosomal protein eL30 family.

This is Large ribosomal subunit protein eL30 (RPL30) from Leishmania major.